Consider the following 271-residue polypeptide: Nus factor SuhB (271 aa).

The Mg(2+) site is built by E67, D86, and L88. E67 provides a ligand contact to substrate. Residues 88-91 (LDGT), R187, and D216 each bind substrate.

Belongs to the inositol monophosphatase superfamily. Homodimer. The rRNA transcription and antitermination complex (rrnTAC) consists of RNA polymerase (RNAP), NusA, NusB, NusE (rpsJ), NusG, SubB, ribosomal protein S4, DNA and precursor rRNA; S4 is more flexible than other subunits. Interacts with the ribosome and with RNA polymerase. The cofactor is Mg(2+).

Its subcellular location is the cytoplasm. The enzyme catalyses a myo-inositol phosphate + H2O = myo-inositol + phosphate. Part of the processive rRNA transcription and antitermination complex (rrnTAC). The complex forms an RNA-chaperone ring around the RNA exit tunnel of RNA polymerase (RNAP). It supports rapid transcription and antitermination of rRNA operons, cotranscriptional rRNA folding, and annealing of distal rRNA regions to allow correct ribosome biogenesis. This subunit may play a central role in organizing the structure. In terms of biological role, a ribosome-associated protein, deletion of which alters the expression of 494 genes, suggesting a role in global gene regulation. Involved in control of pathogenesis-related genes. Required for the activation of virulence factors associated with acute infections (type 3 secretion system, T3SS) while suppressing virulence factors associated with chronic infections (biofilm formation and type 6 secretion system, T6SS). It probably acts at a post-transcriptional level. This is Nus factor SuhB from Pseudomonas aeruginosa (strain ATCC 15692 / DSM 22644 / CIP 104116 / JCM 14847 / LMG 12228 / 1C / PRS 101 / PAO1).